Consider the following 203-residue polypeptide: GTP-binding protein rho4 (203 aa).

Residue 21–28 participates in GTP binding; it reads GDGGCGKT. The Effector region signature appears at 43–51; the sequence is YVPTVFENY. A GTP-binding site is contributed by 70 to 74; the sequence is DTAGQ. Cys-200 bears the Cysteine methyl ester mark. Cys-200 carries the S-geranylgeranyl cysteine lipid modification. The propeptide at 201 to 203 is removed in mature form; the sequence is VIL.

It belongs to the small GTPase superfamily. Rho family.

It is found in the membrane. Its function is as follows. Required for cell separation. Involved in the regulation of the septum degradation during cytokinesis and in the organization of F-actin patches and cytoplasmic microtubules. In Schizosaccharomyces pombe (strain 972 / ATCC 24843) (Fission yeast), this protein is GTP-binding protein rho4 (rho4).